The primary structure comprises 328 residues: Urokinase plasminogen activator surface receptor (328 aa).

Positions 1–24 (MGLLRRRLLLLVVVVTTCVPASQG) are cleaved as a signal peptide. UPAR/Ly6 domains are found at residues 25–118 (LRCI…GRYL), 118–213 (LECA…PPNG), and 214–299 (FQCY…RPTG). Intrachain disulfides connect C27–C48, C30–C36, and C41–C69. The N-linked (GlcNAc...) asparagine glycan is linked to N76. Disulfide bonds link C95–C100, C120–C147, C123–C130, C140–C169, C175–C192, C193–C198, C216–C244, C219–C227, C237–C263, C269–C288, and C289–C294. Residues N184, N194, N222, N255, N283, and N290 are each glycosylated (N-linked (GlcNAc...) asparagine). G299 is lipidated: GPI-anchor amidated glycine. The propeptide at 300–328 (GAPGPGPAHLILIASLLLTLRLWGIPLWT) is removed in mature form.

In terms of assembly, monomer. Interacts (via the UPAR/Ly6 domains) with SRPX2. Interacts with MRC2. Interacts with SORL1 (via N-terminal ectodomain); this interaction decreases PLAUR internalization. The ternary complex composed of PLAUR-PLAU-SERPINE1 also interacts with SORL1. Interacts with CD82; this interaction prevents PLAUR from binding to its high affinity ligand PLAU.

It localises to the cell membrane. The protein resides in the secreted. Acts as a receptor for urokinase plasminogen activator. Plays a role in localizing and promoting plasmin formation. Mediates the proteolysis-independent signal transduction activation effects of U-PA. The chain is Urokinase plasminogen activator surface receptor (Plaur) from Rattus norvegicus (Rat).